We begin with the raw amino-acid sequence, 466 residues long: 3-isopropylmalate dehydratase large subunit (466 aa).

3 residues coordinate [4Fe-4S] cluster: Cys-347, Cys-407, and Cys-410.

This sequence belongs to the aconitase/IPM isomerase family. LeuC type 1 subfamily. As to quaternary structure, heterodimer of LeuC and LeuD. [4Fe-4S] cluster serves as cofactor.

The catalysed reaction is (2R,3S)-3-isopropylmalate = (2S)-2-isopropylmalate. The protein operates within amino-acid biosynthesis; L-leucine biosynthesis; L-leucine from 3-methyl-2-oxobutanoate: step 2/4. Its function is as follows. Catalyzes the isomerization between 2-isopropylmalate and 3-isopropylmalate, via the formation of 2-isopropylmaleate. This Serratia proteamaculans (strain 568) protein is 3-isopropylmalate dehydratase large subunit.